The sequence spans 208 residues: Thiamine-phosphate synthase (208 aa).

Residues 37–41 and asparagine 73 each bind 4-amino-2-methyl-5-(diphosphooxymethyl)pyrimidine; that span reads QYREK. The Mg(2+) site is built by aspartate 74 and aspartate 93. Residue serine 112 coordinates 4-amino-2-methyl-5-(diphosphooxymethyl)pyrimidine. 2-[(2R,5Z)-2-carboxy-4-methylthiazol-5(2H)-ylidene]ethyl phosphate is bound at residue 139–141; sequence TIS. Lysine 142 contacts 4-amino-2-methyl-5-(diphosphooxymethyl)pyrimidine. 2-[(2R,5Z)-2-carboxy-4-methylthiazol-5(2H)-ylidene]ethyl phosphate contacts are provided by residues glycine 171 and 191 to 192; that span reads IS.

The protein belongs to the thiamine-phosphate synthase family. It depends on Mg(2+) as a cofactor.

The enzyme catalyses 2-[(2R,5Z)-2-carboxy-4-methylthiazol-5(2H)-ylidene]ethyl phosphate + 4-amino-2-methyl-5-(diphosphooxymethyl)pyrimidine + 2 H(+) = thiamine phosphate + CO2 + diphosphate. The catalysed reaction is 2-(2-carboxy-4-methylthiazol-5-yl)ethyl phosphate + 4-amino-2-methyl-5-(diphosphooxymethyl)pyrimidine + 2 H(+) = thiamine phosphate + CO2 + diphosphate. It carries out the reaction 4-methyl-5-(2-phosphooxyethyl)-thiazole + 4-amino-2-methyl-5-(diphosphooxymethyl)pyrimidine + H(+) = thiamine phosphate + diphosphate. The protein operates within cofactor biosynthesis; thiamine diphosphate biosynthesis; thiamine phosphate from 4-amino-2-methyl-5-diphosphomethylpyrimidine and 4-methyl-5-(2-phosphoethyl)-thiazole: step 1/1. In terms of biological role, condenses 4-methyl-5-(beta-hydroxyethyl)thiazole monophosphate (THZ-P) and 2-methyl-4-amino-5-hydroxymethyl pyrimidine pyrophosphate (HMP-PP) to form thiamine monophosphate (TMP). This Listeria welshimeri serovar 6b (strain ATCC 35897 / DSM 20650 / CCUG 15529 / CIP 8149 / NCTC 11857 / SLCC 5334 / V8) protein is Thiamine-phosphate synthase.